The following is a 302-amino-acid chain: Probable 5-dehydro-4-deoxyglucarate dehydratase (302 aa).

It belongs to the DapA family.

It carries out the reaction 5-dehydro-4-deoxy-D-glucarate + H(+) = 2,5-dioxopentanoate + CO2 + H2O. It functions in the pathway carbohydrate acid metabolism; D-glucarate degradation; 2,5-dioxopentanoate from D-glucarate: step 2/2. This Rhizobium rhizogenes (strain K84 / ATCC BAA-868) (Agrobacterium radiobacter) protein is Probable 5-dehydro-4-deoxyglucarate dehydratase.